We begin with the raw amino-acid sequence, 57 residues long: MSKTVVRKNESLEDALRRFKRSVSKTGTLAEARKREFYEKPSVKRKKKSEAARKRKF.

The protein belongs to the bacterial ribosomal protein bS21 family.

The chain is Small ribosomal subunit protein bS21 from Bacillus anthracis (strain A0248).